A 706-amino-acid chain; its full sequence is Ribosomal RNA large subunit methyltransferase K/L (706 aa).

Residues 43–154 (LMYQSLLWSR…RDMASVALDL (112 aa)) form the THUMP domain.

Belongs to the methyltransferase superfamily. RlmKL family.

The protein resides in the cytoplasm. The enzyme catalyses guanosine(2445) in 23S rRNA + S-adenosyl-L-methionine = N(2)-methylguanosine(2445) in 23S rRNA + S-adenosyl-L-homocysteine + H(+). It carries out the reaction guanosine(2069) in 23S rRNA + S-adenosyl-L-methionine = N(2)-methylguanosine(2069) in 23S rRNA + S-adenosyl-L-homocysteine + H(+). In terms of biological role, specifically methylates the guanine in position 2445 (m2G2445) and the guanine in position 2069 (m7G2069) of 23S rRNA. The chain is Ribosomal RNA large subunit methyltransferase K/L from Yersinia pseudotuberculosis serotype O:1b (strain IP 31758).